Here is a 339-residue protein sequence, read N- to C-terminus: MWWSLILLSCLLALTSAHDKPSFHPLSDDLINYINKQNTTWQAGRNFYNVDISYLKKLCGTVLGGPKLPGRVAFGEDIDLPETFDAREQWSNCPTIGQIRDQGSCGSCWAFGAVEAISDRTCIHTNGRVNVEVSAEDLLTCCGIQCGDGCNGGYPSGAWSFWTKKGLVSGGVYNSHVGCLPYTIPPCEHHVNGSRPPCTGEGDTPRCNKSCEAGYSPSYKEDKHFGYTSYSVSNSVKEIMAEIYKNGPVEGAFTVFSDFLTYKSGVYKHEAGDMMGGHAIRILGWGVENGVPYWLAANSWNLDWGDNGFFKILRGENHCGIESEIVAGIPRTDQYWGRF.

The signal sequence occupies residues 1 to 17 (MWWSLILLSCLLALTSA). The propeptide at 18-79 (HDKPSFHPLS…GRVAFGEDID (62 aa)) is activation peptide. Cystine bridges form between cysteine 93-cysteine 122, cysteine 105-cysteine 150, cysteine 141-cysteine 207, cysteine 142-cysteine 146, cysteine 179-cysteine 211, and cysteine 187-cysteine 198. Cysteine 108 is an active-site residue. A glycan (N-linked (GlcNAc...) asparagine) is linked at asparagine 192. Lysine 220 bears the N6-acetyllysine mark. Residues histidine 278 and asparagine 298 contribute to the active site. Positions 334-339 (QYWGRF) are excised as a propeptide.

Belongs to the peptidase C1 family. As to quaternary structure, dimer of a heavy chain and a light chain cross-linked by a disulfide bond. Interacts with SRPX2. Directly interacts with SHKBP1. As to expression, expressed in thyroid epithelial cells.

The protein resides in the lysosome. The protein localises to the melanosome. It localises to the secreted. Its subcellular location is the extracellular space. It is found in the apical cell membrane. It catalyses the reaction Hydrolysis of proteins with broad specificity for peptide bonds. Preferentially cleaves -Arg-Arg-|-Xaa bonds in small molecule substrates (thus differing from cathepsin L). In addition to being an endopeptidase, shows peptidyl-dipeptidase activity, liberating C-terminal dipeptides.. Its function is as follows. Thiol protease which is believed to participate in intracellular degradation and turnover of proteins. Cleaves matrix extracellular phosphoglycoprotein MEPE. Involved in the solubilization of cross-linked TG/thyroglobulin in the thyroid follicle lumen. Has also been implicated in tumor invasion and metastasis. This Mus musculus (Mouse) protein is Cathepsin B (Ctsb).